The primary structure comprises 372 residues: Zinc finger protein dpff-1 (372 aa).

The tract at residues 108–204 is disordered; it reads VGPTTESVSD…SRSIVKETKY (97 aa). Residues 109 to 131 are compositionally biased toward polar residues; sequence GPTTESVSDSSNDSTTIRPSRQT. A compositionally biased stretch (basic and acidic residues) spans 132-141; sequence QIKEEYRDDY. Positions 142–158 are enriched in acidic residues; that stretch reads VLDDELSPDEFGSDEDD. The segment covering 184-196 has biased composition (polar residues); sequence TTRSSVSRLTPSR. The C2H2-type zinc-finger motif lies at 212–235; that stretch reads YPCDKCSAKYKSLAGLSYHQSYLH. 2 consecutive PHD-type zinc fingers follow at residues 256 to 314 and 316 to 361; these read SCDF…CKSC and ICGT…CQVE.

It belongs to the requiem/DPF family.

It localises to the nucleus. It is found in the cytoplasm. Functionally, probable transcription factor, involved in meiosis and stress protection. This chain is Zinc finger protein dpff-1, found in Caenorhabditis elegans.